The sequence spans 205 residues: DUF724 domain-containing protein 4 (205 aa).

The tract at residues 28–59 (DASGRGKRRRVEQEHHSDLNNETAAPTGGSAG) is disordered. In terms of domain architecture, DUF724 spans 63-189 (VLPFTKTLAS…MADDYSKLKK (127 aa)).

In terms of tissue distribution, expressed in roots, leaves, stems, flowers and siliques.

It localises to the nucleus. Its function is as follows. May be involved in the polar growth of plant cells via transportation of RNAs. This is DUF724 domain-containing protein 4 from Arabidopsis thaliana (Mouse-ear cress).